Reading from the N-terminus, the 393-residue chain is Elongation factor Tu (393 aa).

A tr-type G domain is found at 6–204 (KPHINVGTIG…ALEKIELPMR (199 aa)). A G1 region spans residues 15-22 (GHVDHGKT). 15 to 22 (GHVDHGKT) contributes to the GTP binding site. T22 serves as a coordination point for Mg(2+). Positions 58–62 (GITIS) are G2. A G3 region spans residues 79–82 (DCPG). Residues 79–83 (DCPGH) and 134–137 (NKCD) contribute to the GTP site. Positions 134–137 (NKCD) are G4. A G5 region spans residues 172–174 (SAV).

Belongs to the TRAFAC class translation factor GTPase superfamily. Classic translation factor GTPase family. EF-Tu/EF-1A subfamily. Monomer.

The protein localises to the cytoplasm. The catalysed reaction is GTP + H2O = GDP + phosphate + H(+). GTP hydrolase that promotes the GTP-dependent binding of aminoacyl-tRNA to the A-site of ribosomes during protein biosynthesis. This is Elongation factor Tu from Anaplasma phagocytophilum (strain HZ).